The primary structure comprises 230 residues: Probable carboxylesterase Culp2 (230 aa).

Residues 1-32 (MNDLLTRRLLTMGAAAAMLAAVLLLTPITVPA) constitute a signal peptide (tat-type signal). Cys-45 and Cys-112 form a disulfide bridge. Ser-123 functions as the Nucleophile in the catalytic mechanism. Cysteines 185 and 192 form a disulfide. Asp-189 is an active-site residue. Catalysis depends on His-207, which acts as the Proton donor/acceptor.

The protein belongs to the cutinase family. Predicted to be exported by the Tat system. The position of the signal peptide cleavage has not been experimentally proven.

It localises to the secreted. It is found in the cell surface. The sequence is that of Probable carboxylesterase Culp2 (cut2) from Mycobacterium bovis (strain ATCC BAA-935 / AF2122/97).